Here is a 101-residue protein sequence, read N- to C-terminus: Gamma-secretase subunit PEN-2 (101 aa).

The Cytoplasmic portion of the chain corresponds to 1 to 17; it reads MNLERVSNEEKLNLCRK. The segment at residues 18 to 36 is an intramembrane region (helical); that stretch reads YYLGGFAFLPFLWLVNIFW. Topologically, residues 37–57 are cytoplasmic; the sequence is FFREAFLAPAYTEQSQIKGYV. The chain crosses the membrane as a helical span at residues 58-78; the sequence is WRSAVGFLFWVIILATWITIF. At 79–101 the chain is on the lumenal side; that stretch reads QIYRPRWGALGDYLSFTIPLGTP.

This sequence belongs to the PEN-2 family. In terms of assembly, the functional gamma-secretase complex is composed of at least four polypeptides: a presenilin homodimer (PSEN1 or PSEN2), nicastrin (NCSTN), APH1 (APH1A or APH1B) and PSENEN.

The protein localises to the endoplasmic reticulum membrane. Its subcellular location is the golgi apparatus. It localises to the golgi stack membrane. It is found in the cell membrane. The protein resides in the membrane. Its function is as follows. Essential subunit of the gamma-secretase complex, an endoprotease complex that catalyzes the intramembrane cleavage of integral membrane proteins such as Notch receptors and APP (amyloid-beta precursor protein). The gamma-secretase complex plays a role in Notch and Wnt signaling cascades and regulation of downstream processes via its role in processing key regulatory proteins, and by regulating cytosolic CTNNB1 levels. PSENEN modulates both endoproteolysis of presenilin and gamma-secretase activity. The chain is Gamma-secretase subunit PEN-2 (Psenen) from Mus musculus (Mouse).